The chain runs to 486 residues: ATP synthase subunit beta (486 aa).

Residue 164–171 participates in ATP binding; that stretch reads GGAGVGKT.

It belongs to the ATPase alpha/beta chains family. F-type ATPases have 2 components, CF(1) - the catalytic core - and CF(0) - the membrane proton channel. CF(1) has five subunits: alpha(3), beta(3), gamma(1), delta(1), epsilon(1). CF(0) has four main subunits: a(1), b(1), b'(1) and c(9-12).

The protein localises to the cellular thylakoid membrane. It carries out the reaction ATP + H2O + 4 H(+)(in) = ADP + phosphate + 5 H(+)(out). Produces ATP from ADP in the presence of a proton gradient across the membrane. The catalytic sites are hosted primarily by the beta subunits. In Prochlorococcus marinus (strain AS9601), this protein is ATP synthase subunit beta.